The primary structure comprises 396 residues: S-adenosylmethionine synthase (396 aa).

His-14 lines the ATP pocket. Asp-16 contributes to the Mg(2+) binding site. Glu-42 is a binding site for K(+). Residues Glu-55 and Gln-98 each coordinate L-methionine. Residues 98-108 (QSPDIAQGVHG) form a flexible loop region. ATP-binding positions include 167 to 169 (DAK), 234 to 235 (RF), Asp-243, 249 to 250 (RK), Ser-266, and Lys-270. Asp-243 contacts L-methionine. Lys-274 is an L-methionine binding site.

The protein belongs to the AdoMet synthase family. As to quaternary structure, homotetramer; dimer of dimers. The cofactor is Mg(2+). K(+) is required as a cofactor.

It is found in the cytoplasm. It catalyses the reaction L-methionine + ATP + H2O = S-adenosyl-L-methionine + phosphate + diphosphate. It functions in the pathway amino-acid biosynthesis; S-adenosyl-L-methionine biosynthesis; S-adenosyl-L-methionine from L-methionine: step 1/1. Its function is as follows. Catalyzes the formation of S-adenosylmethionine (AdoMet) from methionine and ATP. The overall synthetic reaction is composed of two sequential steps, AdoMet formation and the subsequent tripolyphosphate hydrolysis which occurs prior to release of AdoMet from the enzyme. This is S-adenosylmethionine synthase from Treponema pallidum (strain Nichols).